The following is a 266-amino-acid chain: NAD-capped RNA hydrolase NudC (266 aa).

Arg74 provides a ligand contact to substrate. Residues Cys103, Cys106, Cys121, and Cys124 each coordinate Zn(2+). Tyr129 provides a ligand contact to substrate. The Nudix hydrolase domain maps to 130-253; that stretch reads PRVSPCIIVA…TIARVLIDET (124 aa). A divalent metal cation-binding residues include Ala163, Glu179, and Glu183. Residues 164-185 carry the Nudix box motif; sequence GFVEAGETLEQCVAREVEEETG. 197-204 serves as a coordination point for substrate; it reads QPWAFPSN. An a divalent metal cation-binding site is contributed by Glu224. Ala246 serves as a coordination point for substrate.

This sequence belongs to the Nudix hydrolase family. NudC subfamily. As to quaternary structure, homodimer. It depends on Mg(2+) as a cofactor. Mn(2+) serves as cofactor. The cofactor is Zn(2+).

The enzyme catalyses a 5'-end NAD(+)-phospho-ribonucleoside in mRNA + H2O = a 5'-end phospho-adenosine-phospho-ribonucleoside in mRNA + beta-nicotinamide D-ribonucleotide + 2 H(+). The catalysed reaction is NAD(+) + H2O = beta-nicotinamide D-ribonucleotide + AMP + 2 H(+). It carries out the reaction NADH + H2O = reduced beta-nicotinamide D-ribonucleotide + AMP + 2 H(+). Its function is as follows. mRNA decapping enzyme that specifically removes the nicotinamide adenine dinucleotide (NAD) cap from a subset of mRNAs by hydrolyzing the diphosphate linkage to produce nicotinamide mononucleotide (NMN) and 5' monophosphate mRNA. The NAD-cap is present at the 5'-end of some mRNAs and stabilizes RNA against 5'-processing. Has preference for mRNAs with a 5'-end purine. Catalyzes the hydrolysis of a broad range of dinucleotide pyrophosphates. The sequence is that of NAD-capped RNA hydrolase NudC from Photobacterium profundum (strain SS9).